We begin with the raw amino-acid sequence, 120 residues long: Glycine cleavage system H protein (120 aa).

The Lipoyl-binding domain maps to 19–101 (DGTVGISDFA…YTDGWLFRLD (83 aa)). Residue lysine 60 is modified to N6-lipoyllysine.

It belongs to the GcvH family. In terms of assembly, the glycine cleavage system is composed of four proteins: P, T, L and H. Requires (R)-lipoate as cofactor.

The glycine cleavage system catalyzes the degradation of glycine. The H protein shuttles the methylamine group of glycine from the P protein to the T protein. In Deinococcus geothermalis (strain DSM 11300 / CIP 105573 / AG-3a), this protein is Glycine cleavage system H protein.